The sequence spans 579 residues: Deleted in azoospermia protein 4 (579 aa).

Residues 1-10 (MSAANPETPN) are compositionally biased toward polar residues. The disordered stretch occupies residues 1–27 (MSAANPETPNSTISREASTQSSSAAAS). Residues 11 to 27 (STISREASTQSSSAAAS) are compositionally biased toward low complexity. Positions 40-115 (NTVFVGGIDA…KKLKLGPAIR (76 aa)) constitute an RRM 1 domain. Residues 163–175 (QHVQSAANPETPN) show a composition bias toward polar residues. Positions 163 to 192 (QHVQSAANPETPNSTISREASTQSSSAAAS) are disordered. Low complexity predominate over residues 176-192 (STISREASTQSSSAAAS). Residues 205 to 280 (NTVFVGGIDA…KKLKLGPAIR (76 aa)) enclose the RRM 2 domain. DAZ domains are found at residues 332–355 (AYSAYPHSPGQVITGCQLLVYNYQ), 356–379 (EYPTYPDSAFQVTTGYQLPVYNYQ), 380–403 (PFPAYPRSPFQVTAGYQLPVYNYQ), 404–427 (AFPAYPNSPFQVATGYQFPVYNYQ), 428–451 (PFPAYPSSPFQVTAGYQLPVYNYQ), 452–475 (AFPAYPNSPFQVATGYQFPVYNYQ), 476–499 (AFPAYPNSPVQVTTGYQLPVYNYQ), 500–523 (AFPAYPSSPFQVTTGYQLPVYNYQ), and 524–547 (AFPAYPNSAVQVTTGYQFHVYNYQ).

It belongs to the RRM DAZ family. In terms of assembly, forms a heterodimer with BOLL and DAZL. Interacts with PUM2, DAZAP1, DAZAP2, DZIP1 and DZIP3. In terms of tissue distribution, testis-specific. Expression restricted to premeiotic germ cells, particularly in spermatogonia (at protein level).

The protein resides in the cytoplasm. It is found in the nucleus. Functionally, RNA-binding protein that plays an essential role in spermatogenesis. May act by binding to the 3'-UTR of mRNAs and regulating their translation. This Homo sapiens (Human) protein is Deleted in azoospermia protein 4 (DAZ4).